Consider the following 146-residue polypeptide: Snaclec coagulation factor X-activating enzyme light chain 1 (146 aa).

Residues 1–23 (MGRFISVSFGCLVVFLSLSGTEA) form the signal peptide. The cysteines at positions 27 and 38 are disulfide-linked. One can recognise a C-type lectin domain in the interval 34–145 (YEQHCYKGFN…CNFIAPVVCK (112 aa)). Asn-47 carries an N-linked (GlcNAc...) (complex) asparagine glycan. 2 cysteine pairs are disulfide-bonded: Cys-55-Cys-144 and Cys-121-Cys-136.

It belongs to the snaclec family. As to quaternary structure, heterotrimer; disulfide-linked. The heterotrimer consists of 1 heavy chain (a metalloproteinase) and 2 light chains: LC1 and LC2. N-glycosylated; probably required for conformation. Removal of easily accessible sugars does not change its functional capacity, but removal of the core sugars with N-glycanase causes a virtually complete loss of enzyme activity, apparently as a result of major conformational changes in the molecule. Not O-glycosylated. Expressed by the venom gland.

It localises to the secreted. Functionally, regulatory subunit of the blood coagulation factor X- and IX-activating enzyme. The enzyme activates coagulation factor X (F10) by cleaving the Arg-Ile bond and is also able to activate coagulation factor IX (F9) and protein S (PROS1) by specific cleavage of Arg-Ile and Arg-Val bonds. May serve as an exosite by which the enzyme recognizes and binds to the Gla domain of factor X (F10) and factor IX (F9) in a calcium-dependent manner. This Daboia siamensis (Eastern Russel's viper) protein is Snaclec coagulation factor X-activating enzyme light chain 1 (LC1).